A 499-amino-acid chain; its full sequence is Alpha-amylase A type-1/2 (499 aa).

A signal peptide spans 1 to 21 (MMVAWWSLFLYGLQVAAPALA). Cysteines 51 and 59 form a disulfide. Glutamine 56 and tryptophan 104 together coordinate substrate. Asparagine 142 is a binding site for Ca(2+). Position 143 (histidine 143) interacts with substrate. Cysteine 171 and cysteine 185 are oxidised to a cystine. Residues glutamate 183 and aspartate 196 each coordinate Ca(2+). Asparagine 218 carries N-linked (GlcNAc...) asparagine glycosylation. Arginine 225 contacts substrate. Ca(2+)-binding residues include aspartate 227, histidine 231, and glutamate 251. Aspartate 227 serves as the catalytic Nucleophile. 230–231 (KH) lines the substrate pocket. Glutamate 251 functions as the Proton donor in the catalytic mechanism. Glycine 255 serves as a coordination point for substrate. A disulfide bridge links cysteine 261 with cysteine 304. 2 residues coordinate substrate: aspartate 318 and arginine 365. Cysteine 461 and cysteine 496 are joined by a disulfide.

The protein belongs to the glycosyl hydrolase 13 family. As to quaternary structure, monomer. Ca(2+) serves as cofactor.

The protein resides in the secreted. The enzyme catalyses Endohydrolysis of (1-&gt;4)-alpha-D-glucosidic linkages in polysaccharides containing three or more (1-&gt;4)-alpha-linked D-glucose units.. This chain is Alpha-amylase A type-1/2 (amy1), found in Aspergillus oryzae (strain ATCC 42149 / RIB 40) (Yellow koji mold).